Consider the following 388-residue polypeptide: Alanine racemase (388 aa).

Residue Lys40 is the Proton acceptor; specific for D-alanine of the active site. The residue at position 40 (Lys40) is an N6-(pyridoxal phosphate)lysine. Arg137 is a substrate binding site. The Proton acceptor; specific for L-alanine role is filled by Tyr269. Residue Met318 participates in substrate binding.

It belongs to the alanine racemase family. It depends on pyridoxal 5'-phosphate as a cofactor.

It carries out the reaction L-alanine = D-alanine. Its pathway is amino-acid biosynthesis; D-alanine biosynthesis; D-alanine from L-alanine: step 1/1. Its function is as follows. Catalyzes the interconversion of L-alanine and D-alanine. May also act on other amino acids. In Halalkalibacterium halodurans (strain ATCC BAA-125 / DSM 18197 / FERM 7344 / JCM 9153 / C-125) (Bacillus halodurans), this protein is Alanine racemase (alr).